Reading from the N-terminus, the 525-residue chain is Bifunctional purine biosynthesis protein PurH (525 aa).

Residues 1-145 enclose the MGS-like domain; sequence MSNVERALIS…KNNASVGIVT (145 aa).

Belongs to the PurH family.

The catalysed reaction is (6R)-10-formyltetrahydrofolate + 5-amino-1-(5-phospho-beta-D-ribosyl)imidazole-4-carboxamide = 5-formamido-1-(5-phospho-D-ribosyl)imidazole-4-carboxamide + (6S)-5,6,7,8-tetrahydrofolate. It carries out the reaction IMP + H2O = 5-formamido-1-(5-phospho-D-ribosyl)imidazole-4-carboxamide. Its pathway is purine metabolism; IMP biosynthesis via de novo pathway; 5-formamido-1-(5-phospho-D-ribosyl)imidazole-4-carboxamide from 5-amino-1-(5-phospho-D-ribosyl)imidazole-4-carboxamide (10-formyl THF route): step 1/1. It participates in purine metabolism; IMP biosynthesis via de novo pathway; IMP from 5-formamido-1-(5-phospho-D-ribosyl)imidazole-4-carboxamide: step 1/1. In Alcanivorax borkumensis (strain ATCC 700651 / DSM 11573 / NCIMB 13689 / SK2), this protein is Bifunctional purine biosynthesis protein PurH.